Here is a 222-residue protein sequence, read N- to C-terminus: N-(5'-phosphoribosyl)anthranilate isomerase (222 aa).

This sequence belongs to the TrpF family.

It catalyses the reaction N-(5-phospho-beta-D-ribosyl)anthranilate = 1-(2-carboxyphenylamino)-1-deoxy-D-ribulose 5-phosphate. The protein operates within amino-acid biosynthesis; L-tryptophan biosynthesis; L-tryptophan from chorismate: step 3/5. This chain is N-(5'-phosphoribosyl)anthranilate isomerase, found in Rhizobium johnstonii (strain DSM 114642 / LMG 32736 / 3841) (Rhizobium leguminosarum bv. viciae).